We begin with the raw amino-acid sequence, 545 residues long: Calcium-binding mitochondrial carrier SAL1 (545 aa).

One can recognise an EF-hand 1 domain in the interval 11–46 (QRDIRYACLFKELDVKGNGQVTLDNLISAFEKNDHP). The Ca(2+) site is built by K65, D70, D93, D95, D97, K99, and E104. 3 EF-hand domains span residues 80–115 (NAESQIWNGFQRIDLDHDGKIGINEINRYLSDLDNQ), 120–155 (NELNHELSNEKMNKFSRFFEWAFPKRKANIALRGQA), and 156–191 (SHKKNTDNDRSKKTTDSDLYVTYDQWRDFLLLVPRK). Ca(2+) contacts are provided by T161 and S166. 3 Solcar repeats span residues 225–332 (IRGF…TKKI), 345–434 (LSKF…LKKW), and 452–541 (LSNL…LKKF). The next 6 helical transmembrane spans lie at 231-248 (FIAGGISGVISRTCTAPF), 307-326 (GNGLNVIKVFPESSIKFGSF), 355-368 (GLAGMAAQFSVYPI), 409-428 (GVTVGIVGIFPYAALDLGTF), 458-475 (LPMGAFSGTVGASVVYPI), and 516-535 (GLVPTLAKVCPAVSISYLCY).

Belongs to the mitochondrial carrier (TC 2.A.29) family.

Its subcellular location is the mitochondrion inner membrane. Calcium-dependent mitochondrial solute carrier. The sequence is that of Calcium-binding mitochondrial carrier SAL1 (SAL1) from Saccharomyces cerevisiae (Baker's yeast).